We begin with the raw amino-acid sequence, 260 residues long: MAYKPQFYPGATKVAENRRNHLNPNYELEKLREIPDEDVVKIMGHRQPGEDYKTVHPPLEEMDMPADYVRDLVEPLNGAKEGHRVRYIQFADSMYFAPAQPYDRSRLYMIRLRGVDAGTLSGRQVVECRESDLEEFSKNLLMDTELFDPATSGVRGATVHGHSLRLDENGMMFDALQRCVFDEKTGHVMYVKDQVGKPLDQPVDVGEPMPEAKLREITTIYRKDGIAMRTDPEVIEVVKRIHRARTLGGYIPTNEIFKGL.

Coenzyme M is bound at residue Arg123.

The protein belongs to the methyl-coenzyme M reductase gamma subunit family. As to quaternary structure, MCR is a hexamer of two alpha, two beta, and two gamma chains, forming a dimer of heterotrimers. The cofactor is coenzyme F430.

It is found in the cytoplasm. It catalyses the reaction coenzyme B + methyl-coenzyme M = methane + coenzyme M-coenzyme B heterodisulfide. It functions in the pathway one-carbon metabolism; methyl-coenzyme M reduction; methane from methyl-coenzyme M: step 1/1. Component of the methyl-coenzyme M reductase (MCR) I that catalyzes the reductive cleavage of methyl-coenzyme M (CoM-S-CH3 or 2-(methylthio)ethanesulfonate) using coenzyme B (CoB or 7-mercaptoheptanoylthreonine phosphate) as reductant which results in the production of methane and the mixed heterodisulfide of CoB and CoM (CoM-S-S-CoB). This is the final step in methanogenesis. The chain is Methyl-coenzyme M reductase subunit gamma (mcrG) from Methanococcus vannielii.